A 354-amino-acid chain; its full sequence is MTVLKNDRFLRALMRQPVDQTPVWMMRQAGRYLPEYRATRAQAGDFMGLCTNPERACEVTLQPLERYPLDAAILFSDILTIPDAMGLGLYFETGEGPKFKKTISTAADIEKLEVIKPLQDLPYVMDAVSTIRRELNGRVPLIGFSGSPWTLATYMVEGGSSKDFQKTKALIYNHPEAAAQLMDKLADSVIAYLNAQIDAGAQAVQIFDSWGGALSHDAYKTFSLAPMAKIVKGLKRENEGRKVPVILFTKGGGQWLEAMADAGADCLGLDWTTDIGQARARVGDKVALQGNMDPSILYASPDRIREEVARILASYGAGTGHVFNLGHGITPGVDPEHAGAFIRAVGELSAQYHK.

Substrate contacts are provided by residues Arg-27 to Arg-31, Asp-77, Tyr-154, Ser-209, and His-327.

The protein belongs to the uroporphyrinogen decarboxylase family. Homodimer.

The protein localises to the cytoplasm. It catalyses the reaction uroporphyrinogen III + 4 H(+) = coproporphyrinogen III + 4 CO2. It participates in porphyrin-containing compound metabolism; protoporphyrin-IX biosynthesis; coproporphyrinogen-III from 5-aminolevulinate: step 4/4. In terms of biological role, catalyzes the decarboxylation of four acetate groups of uroporphyrinogen-III to yield coproporphyrinogen-III. The chain is Uroporphyrinogen decarboxylase from Saccharophagus degradans (strain 2-40 / ATCC 43961 / DSM 17024).